The following is a 219-amino-acid chain: Chloramphenicol acetyltransferase (219 aa).

Residue H190 is the Proton acceptor of the active site.

It belongs to the chloramphenicol acetyltransferase family. In terms of assembly, homotrimer.

It carries out the reaction chloramphenicol + acetyl-CoA = chloramphenicol 3-acetate + CoA. This enzyme is an effector of chloramphenicol resistance in bacteria. The chain is Chloramphenicol acetyltransferase (catB) from Clostridium butyricum.